The sequence spans 357 residues: RNA-binding protein 4B (357 aa).

2 RRM domains span residues 2–72 and 78–148; these read VKLF…ASKN and TKLH…LSTS. The segment at 160–177 adopts a CCHC-type zinc-finger fold; that stretch reads SGCYRCGKEGHWSKECPV. Residues 196–357 form an interaction with TNPO3 region; the sequence is AVRTPYTMGY…YVDRTRYSAF (162 aa).

As to quaternary structure, interacts with TNPO3, which may mediate nuclear import of the protein. Expressed in the suprachiasmatic nucleus (SCN) (at protein level). Expressed in the suprachiasmatic nucleus (SCN).

It localises to the nucleus. The protein resides in the nucleolus. In terms of biological role, required for the translational activation of PER1 mRNA in response to circadian clock. Binds directly to the 3'-UTR of the PER1 mRNA. In Mus musculus (Mouse), this protein is RNA-binding protein 4B (Rbm4b).